Here is a 264-residue protein sequence, read N- to C-terminus: Hydroxyethylthiazole kinase (264 aa).

Met52 contributes to the substrate binding site. 2 residues coordinate ATP: Arg127 and Thr173. Position 200 (Gly200) interacts with substrate.

The protein belongs to the Thz kinase family. The cofactor is Mg(2+).

The catalysed reaction is 5-(2-hydroxyethyl)-4-methylthiazole + ATP = 4-methyl-5-(2-phosphooxyethyl)-thiazole + ADP + H(+). Its pathway is cofactor biosynthesis; thiamine diphosphate biosynthesis; 4-methyl-5-(2-phosphoethyl)-thiazole from 5-(2-hydroxyethyl)-4-methylthiazole: step 1/1. Functionally, catalyzes the phosphorylation of the hydroxyl group of 4-methyl-5-beta-hydroxyethylthiazole (THZ). This is Hydroxyethylthiazole kinase from Serratia proteamaculans (strain 568).